The following is a 64-amino-acid chain: Large ribosomal subunit protein bL33c (64 aa).

It belongs to the bacterial ribosomal protein bL33 family.

The protein resides in the plastid. The protein localises to the organellar chromatophore. In Paulinella chromatophora, this protein is Large ribosomal subunit protein bL33c.